The sequence spans 486 residues: Cardiolipin synthase A (486 aa).

A run of 2 helical transmembrane segments spans residues T3 to V23 and M38 to V58. 2 PLD phosphodiesterase domains span residues M219–R246 and E399–S426. Residues H224, K226, D231, H404, K406, and D411 contribute to the active site.

Belongs to the phospholipase D family. Cardiolipin synthase subfamily. ClsA sub-subfamily.

It localises to the cell inner membrane. The enzyme catalyses 2 a 1,2-diacyl-sn-glycero-3-phospho-(1'-sn-glycerol) = a cardiolipin + glycerol. In terms of biological role, catalyzes the reversible phosphatidyl group transfer from one phosphatidylglycerol molecule to another to form cardiolipin (CL) (diphosphatidylglycerol) and glycerol. This Shigella flexneri protein is Cardiolipin synthase A.